The following is a 186-amino-acid chain: Lipoprotein signal peptidase (186 aa).

4 consecutive transmembrane segments (helical) span residues 8–28 (FFSVFKPGYLAFVAFGLFLDL), 44–64 (IPVLGDFFRLSLTFNTGFVFG), 66–86 (FQDNALPSLFATGFAIVFLIF), and 97–117 (AWGWNFVMAGAFGNFLDKFFV). Catalysis depends on residues D142 and D164. Residues 157 to 177 (WPAFNVADSCVSIGIVILLFT) traverse the membrane as a helical segment.

The protein belongs to the peptidase A8 family.

It localises to the cell inner membrane. It catalyses the reaction Release of signal peptides from bacterial membrane prolipoproteins. Hydrolyzes -Xaa-Yaa-Zaa-|-(S,diacylglyceryl)Cys-, in which Xaa is hydrophobic (preferably Leu), and Yaa (Ala or Ser) and Zaa (Gly or Ala) have small, neutral side chains.. The protein operates within protein modification; lipoprotein biosynthesis (signal peptide cleavage). Functionally, this protein specifically catalyzes the removal of signal peptides from prolipoproteins. The sequence is that of Lipoprotein signal peptidase from Leptospira biflexa serovar Patoc (strain Patoc 1 / ATCC 23582 / Paris).